The primary structure comprises 201 residues: Peptidyl-prolyl cis-trans isomerase CYP19-4 (201 aa).

The N-terminal stretch at 1–23 is a signal peptide; it reads MAKASFILLGTLFLFGAIASIQA. Positions 35–198 constitute a PPIase cyclophilin-type domain; the sequence is YFDVEIDGKS…SKVVIADSGE (164 aa).

It belongs to the cyclophilin-type PPIase family. In terms of assembly, interacts with EMB30/GNOM. Ubiquitous, mostly in aerial organs (at protein level).

The protein localises to the cytoplasm. Its subcellular location is the membrane. The protein resides in the endoplasmic reticulum. It localises to the secreted. The enzyme catalyses [protein]-peptidylproline (omega=180) = [protein]-peptidylproline (omega=0). Its activity is regulated as follows. Binds cyclosporin A (CsA). CsA mediates some of its effects via an inhibitory action on PPIase. In terms of biological role, PPIases accelerate the folding of proteins. It catalyzes the cis-trans isomerization of proline imidic peptide bonds in oligopeptides. May be involved during embryogenesis and organ development by regulating the folding of EMB30/GNOM, and thus, by modulating its activity. The sequence is that of Peptidyl-prolyl cis-trans isomerase CYP19-4 (CYP19-4) from Arabidopsis thaliana (Mouse-ear cress).